Reading from the N-terminus, the 374-residue chain is Isopentenyl-diphosphate delta-isomerase (374 aa).

13–14 (RK) provides a ligand contact to substrate. FMN contacts are provided by residues 71 to 73 (GMT), Ser-104, and Asn-132. Position 104–106 (104–106 (SQR)) interacts with substrate. Gln-171 contributes to the substrate binding site. Glu-172 is a binding site for Mg(2+). Residues Lys-203, Thr-233, 282–284 (GMR), and 303–304 (AL) each bind FMN.

This sequence belongs to the IPP isomerase type 2 family. As to quaternary structure, homooctamer. Dimer of tetramers. FMN serves as cofactor. It depends on NADPH as a cofactor. The cofactor is Mg(2+).

It localises to the cytoplasm. It catalyses the reaction isopentenyl diphosphate = dimethylallyl diphosphate. Functionally, involved in the biosynthesis of isoprenoids. Catalyzes the 1,3-allylic rearrangement of the homoallylic substrate isopentenyl (IPP) to its allylic isomer, dimethylallyl diphosphate (DMAPP). The polypeptide is Isopentenyl-diphosphate delta-isomerase (Thermococcus kodakarensis (strain ATCC BAA-918 / JCM 12380 / KOD1) (Pyrococcus kodakaraensis (strain KOD1))).